A 31-amino-acid polypeptide reads, in one-letter code: GIPCGESCVYIPCTVTALLGCSCKDKVCYKN.

The segment at residues 1 to 31 (GIPCGESCVYIPCTVTALLGCSCKDKVCYKN) is a cross-link (cyclopeptide (Gly-Asn)). 3 disulfide bridges follow: C4-C21, C8-C23, and C13-C28.

Contains 3 disulfide bonds. In terms of processing, this is a cyclic peptide. As to expression, expressed in seed, root and nodule but not in flower, stem, shoot, leaf and pod (at protein level).

In terms of biological role, probably participates in a plant defense mechanism. The sequence is that of Cliotide T10 from Clitoria ternatea (Butterfly pea).